Reading from the N-terminus, the 929-residue chain is Protein translocase subunit SecA (929 aa).

ATP is bound by residues glutamine 87, 105-109, and aspartate 512; that span reads GEGKT. Zn(2+) is bound by residues cysteine 914, cysteine 916, cysteine 925, and histidine 926.

It belongs to the SecA family. As to quaternary structure, monomer and homodimer. Part of the essential Sec protein translocation apparatus which comprises SecA, SecYEG and auxiliary proteins SecDF-YajC and YidC. Zn(2+) serves as cofactor.

It localises to the cell inner membrane. Its subcellular location is the cytoplasm. The catalysed reaction is ATP + H2O + cellular proteinSide 1 = ADP + phosphate + cellular proteinSide 2.. Part of the Sec protein translocase complex. Interacts with the SecYEG preprotein conducting channel. Has a central role in coupling the hydrolysis of ATP to the transfer of proteins into and across the cell membrane, serving both as a receptor for the preprotein-SecB complex and as an ATP-driven molecular motor driving the stepwise translocation of polypeptide chains across the membrane. The protein is Protein translocase subunit SecA of Psychrobacter arcticus (strain DSM 17307 / VKM B-2377 / 273-4).